Here is a 401-residue protein sequence, read N- to C-terminus: Adenylosuccinate synthetase (401 aa).

Residues glycine 11–lysine 17 and glycine 39–threonine 41 contribute to the GTP site. The Proton acceptor role is filled by aspartate 12. Positions 12 and 39 each coordinate Mg(2+). Residues aspartate 12 to lysine 15, asparagine 37 to histidine 40, threonine 127, arginine 141, glutamine 212, threonine 227, and arginine 290 contribute to the IMP site. Histidine 40 (proton donor) is an active-site residue. Alanine 286–arginine 292 contributes to the substrate binding site. Residues arginine 292, lysine 318–aspartate 320, and serine 390–glycine 392 contribute to the GTP site.

Belongs to the adenylosuccinate synthetase family. As to quaternary structure, homodimer. Mg(2+) serves as cofactor.

It localises to the cytoplasm. It carries out the reaction IMP + L-aspartate + GTP = N(6)-(1,2-dicarboxyethyl)-AMP + GDP + phosphate + 2 H(+). Its pathway is purine metabolism; AMP biosynthesis via de novo pathway; AMP from IMP: step 1/2. In terms of biological role, plays an important role in the de novo pathway of purine nucleotide biosynthesis. Catalyzes the first committed step in the biosynthesis of AMP from IMP. In Thermosipho africanus (strain TCF52B), this protein is Adenylosuccinate synthetase.